The primary structure comprises 509 residues: MRCDGEVIIVGSGIAAMMSAYLLRKSFHVIMITKSDVFASNSFLAQGGIAAPIAEGDDWQAHTADTWKAGAAHGDETSIEMMTKHAVNMIELLDDLGVSFDREESGGYSLGLEGAHGTRRIVHVNGAETGKAVMRALWKAIKNEITLLDRTCVYRFIKNKDEIIGVETDQGSLFAPVTIVATGGCGQMYSVTSNGKEATGDGIALAYRSGAAISDVEFIQFHPTVYTGNEKEKGLLISEAVRGEGGQLITSAGERLQSLKSRDVVSREIFRQEREGHTVHLDLTGISDFERKFPALYKGFNKSDRRTLKPRVTPGAHFLNGGISVDAWGQTSLSRLYAVGEVACTGVHGANRLASNSLLEGLVFAHQAATHIQQTFQPLTAGLFVERDKAEPRSFKLPTREDLQKKMMRYVGIERHARSLWYMNNWFQPFLDTAHYNGPWPERDMFEQANMTLLASLITRSAAIRTESRGGHFRADYPNGLDKFQQLIIEWQNGAHMKRQRPTIKELSR.

FAD-binding positions include 12 to 15, lysine 34, 41 to 48, and aspartate 201; these read SGIA and NSFLAQGG. The active-site Proton donor/acceptor is the arginine 262. FAD contacts are provided by residues glutamate 341 and 357 to 358; that span reads SL.

It belongs to the FAD-dependent oxidoreductase 2 family. NadB subfamily. FAD is required as a cofactor.

The protein resides in the cytoplasm. It carries out the reaction L-aspartate + O2 = iminosuccinate + H2O2. Its pathway is cofactor biosynthesis; NAD(+) biosynthesis; iminoaspartate from L-aspartate (oxidase route): step 1/1. In terms of biological role, catalyzes the oxidation of L-aspartate to iminoaspartate, the first step in the de novo biosynthesis of NAD(+). In Halalkalibacterium halodurans (strain ATCC BAA-125 / DSM 18197 / FERM 7344 / JCM 9153 / C-125) (Bacillus halodurans), this protein is L-aspartate oxidase (nadB).